The sequence spans 396 residues: Probable tRNA sulfurtransferase (396 aa).

The THUMP domain occupies 58–169; that stretch reads NQFIEKLKMV…KKNIYVFTRS (112 aa). ATP contacts are provided by residues 187–188, 212–213, Arg-269, Gly-291, and Gln-300; these read LL and YF.

The protein belongs to the ThiI family.

It is found in the cytoplasm. The enzyme catalyses [ThiI sulfur-carrier protein]-S-sulfanyl-L-cysteine + a uridine in tRNA + 2 reduced [2Fe-2S]-[ferredoxin] + ATP + H(+) = [ThiI sulfur-carrier protein]-L-cysteine + a 4-thiouridine in tRNA + 2 oxidized [2Fe-2S]-[ferredoxin] + AMP + diphosphate. It catalyses the reaction [ThiS sulfur-carrier protein]-C-terminal Gly-Gly-AMP + S-sulfanyl-L-cysteinyl-[cysteine desulfurase] + AH2 = [ThiS sulfur-carrier protein]-C-terminal-Gly-aminoethanethioate + L-cysteinyl-[cysteine desulfurase] + A + AMP + 2 H(+). It functions in the pathway cofactor biosynthesis; thiamine diphosphate biosynthesis. In terms of biological role, catalyzes the ATP-dependent transfer of a sulfur to tRNA to produce 4-thiouridine in position 8 of tRNAs, which functions as a near-UV photosensor. Also catalyzes the transfer of sulfur to the sulfur carrier protein ThiS, forming ThiS-thiocarboxylate. This is a step in the synthesis of thiazole, in the thiamine biosynthesis pathway. The sulfur is donated as persulfide by IscS. In Halothermothrix orenii (strain H 168 / OCM 544 / DSM 9562), this protein is Probable tRNA sulfurtransferase.